Here is a 565-residue protein sequence, read N- to C-terminus: DNA-directed RNA polymerase subunit beta C-terminal section (565 aa).

This sequence belongs to the RNA polymerase beta chain family. In plastids the minimal PEP RNA polymerase catalytic core is composed of four subunits: alpha, beta, beta', and beta''. When a (nuclear-encoded) sigma factor is associated with the core the holoenzyme is formed, which can initiate transcription.

It is found in the plastid. The protein localises to the chloroplast. It carries out the reaction RNA(n) + a ribonucleoside 5'-triphosphate = RNA(n+1) + diphosphate. Functionally, DNA-dependent RNA polymerase catalyzes the transcription of DNA into RNA using the four ribonucleoside triphosphates as substrates. In Tetradesmus obliquus (Green alga), this protein is DNA-directed RNA polymerase subunit beta C-terminal section (rpoB2).